Reading from the N-terminus, the 158-residue chain is Small ribosomal subunit protein uS9 (158 aa).

Belongs to the universal ribosomal protein uS9 family.

This Brucella anthropi (strain ATCC 49188 / DSM 6882 / CCUG 24695 / JCM 21032 / LMG 3331 / NBRC 15819 / NCTC 12168 / Alc 37) (Ochrobactrum anthropi) protein is Small ribosomal subunit protein uS9.